The chain runs to 916 residues: Isoleucine--tRNA ligase (916 aa).

The 'HIGH' region motif lies at 57–67; that stretch reads PYANGNLHMGH. Glu554 is an L-isoleucyl-5'-AMP binding site. A 'KMSKS' region motif is present at residues 595-599; sequence KMSKS. Residue Lys598 participates in ATP binding. Zn(2+) is bound by residues Cys885, Cys888, Cys905, and Cys908.

It belongs to the class-I aminoacyl-tRNA synthetase family. IleS type 1 subfamily. In terms of assembly, monomer. Requires Zn(2+) as cofactor.

It is found in the cytoplasm. The catalysed reaction is tRNA(Ile) + L-isoleucine + ATP = L-isoleucyl-tRNA(Ile) + AMP + diphosphate. Functionally, catalyzes the attachment of isoleucine to tRNA(Ile). As IleRS can inadvertently accommodate and process structurally similar amino acids such as valine, to avoid such errors it has two additional distinct tRNA(Ile)-dependent editing activities. One activity is designated as 'pretransfer' editing and involves the hydrolysis of activated Val-AMP. The other activity is designated 'posttransfer' editing and involves deacylation of mischarged Val-tRNA(Ile). The protein is Isoleucine--tRNA ligase (ileS) of Staphylococcus epidermidis (strain ATCC 35984 / DSM 28319 / BCRC 17069 / CCUG 31568 / BM 3577 / RP62A).